The chain runs to 185 residues: Ribosome-recycling factor (185 aa).

It belongs to the RRF family.

Its subcellular location is the cytoplasm. In terms of biological role, responsible for the release of ribosomes from messenger RNA at the termination of protein biosynthesis. May increase the efficiency of translation by recycling ribosomes from one round of translation to another. This chain is Ribosome-recycling factor, found in Rhodospirillum centenum (strain ATCC 51521 / SW).